Reading from the N-terminus, the 561-residue chain is Dihydroxy-acid dehydratase (561 aa).

Cys50 contacts [2Fe-2S] cluster. Asp82 is a Mg(2+) binding site. Residue Cys123 participates in [2Fe-2S] cluster binding. Asp124 and Lys125 together coordinate Mg(2+). The residue at position 125 (Lys125) is an N6-carboxylysine. Cys195 lines the [2Fe-2S] cluster pocket. Residue Glu447 participates in Mg(2+) binding. Ser473 serves as the catalytic Proton acceptor.

It belongs to the IlvD/Edd family. In terms of assembly, homodimer. It depends on [2Fe-2S] cluster as a cofactor. Requires Mg(2+) as cofactor.

The enzyme catalyses (2R)-2,3-dihydroxy-3-methylbutanoate = 3-methyl-2-oxobutanoate + H2O. It catalyses the reaction (2R,3R)-2,3-dihydroxy-3-methylpentanoate = (S)-3-methyl-2-oxopentanoate + H2O. It functions in the pathway amino-acid biosynthesis; L-isoleucine biosynthesis; L-isoleucine from 2-oxobutanoate: step 3/4. It participates in amino-acid biosynthesis; L-valine biosynthesis; L-valine from pyruvate: step 3/4. Its function is as follows. Functions in the biosynthesis of branched-chain amino acids. Catalyzes the dehydration of (2R,3R)-2,3-dihydroxy-3-methylpentanoate (2,3-dihydroxy-3-methylvalerate) into 2-oxo-3-methylpentanoate (2-oxo-3-methylvalerate) and of (2R)-2,3-dihydroxy-3-methylbutanoate (2,3-dihydroxyisovalerate) into 2-oxo-3-methylbutanoate (2-oxoisovalerate), the penultimate precursor to L-isoleucine and L-valine, respectively. The sequence is that of Dihydroxy-acid dehydratase from Microcystis aeruginosa (strain NIES-843 / IAM M-2473).